The chain runs to 593 residues: Melanopsin-A (593 aa).

At 1 to 77 (MMSGAAHSVR…VDVPDHAHYT (77 aa)) the chain is on the extracellular side. A helical membrane pass occupies residues 78–98 (IGAVILTVGITGMLGNFLVIY). Residues 99–112 (AFSRSRTLRTPANL) are Cytoplasmic-facing. Residues 113 to 133 (FIINLAITDFLMCATQAPIFF) traverse the membrane as a helical segment. The Extracellular segment spans residues 134 to 150 (TTSMHKRWIFGEKGCEL). Cysteine 148 and cysteine 226 are oxidised to a cystine. A helical transmembrane segment spans residues 151–171 (YAFCGALFGICSMITLMVIAV). Over 172-191 (DRYFVITRPLASIGVLSQKR) the chain is Cytoplasmic. Residues 192-212 (ALLILLVAWVYSLGWSLPPFF) traverse the membrane as a helical segment. Topologically, residues 213 to 243 (GWSAYVPEGLLTSCTWDYMTFTPSVRAYTML) are extracellular. The helical transmembrane segment at 244 to 264 (LFIFVFFIPLIVIIYCYFFIF) threads the bilayer. Over 265 to 300 (RSIRTTNEAVGKINGDNKRDSMKRFQRLKNEWKMAK) the chain is Cytoplasmic. A helical membrane pass occupies residues 301-321 (IALIVILMYVISWSPYSTVAL). The Extracellular segment spans residues 322–336 (TAFAGYSDFLTPYMN). Residues 337 to 357 (SVPAVIAKASAIHNPIIYAIT) traverse the membrane as a helical segment. Lysine 344 carries the post-translational modification N6-(retinylidene)lysine. Residues 358 to 593 (HPKYRLAIAK…HIDNHRPQYL (236 aa)) lie on the Cytoplasmic side of the membrane. Disordered stretches follow at residues 397-449 (TVTS…RQVS) and 547-593 (RSNV…PQYL). Residues 414–449 (TGKSRLSSASDSESGWTDTEADLSSMSSRPASRQVS) show a composition bias toward polar residues. Residues 581-593 (ESGHIDNHRPQYL) are compositionally biased toward basic and acidic residues.

This sequence belongs to the G-protein coupled receptor 1 family. Opsin subfamily.

The protein resides in the cell membrane. Photoreceptor implicated in non-image-forming responses to light. May be able to isomerize covalently bound all-trans retinal back to 11-cis retinal. This Danio rerio (Zebrafish) protein is Melanopsin-A (opn4a).